The primary structure comprises 315 residues: Methionyl-tRNA formyltransferase (315 aa).

113–116 (SLLP) is a (6S)-5,6,7,8-tetrahydrofolate binding site.

It belongs to the Fmt family.

It catalyses the reaction L-methionyl-tRNA(fMet) + (6R)-10-formyltetrahydrofolate = N-formyl-L-methionyl-tRNA(fMet) + (6S)-5,6,7,8-tetrahydrofolate + H(+). Functionally, attaches a formyl group to the free amino group of methionyl-tRNA(fMet). The formyl group appears to play a dual role in the initiator identity of N-formylmethionyl-tRNA by promoting its recognition by IF2 and preventing the misappropriation of this tRNA by the elongation apparatus. This Escherichia coli O6:K15:H31 (strain 536 / UPEC) protein is Methionyl-tRNA formyltransferase.